An 86-amino-acid polypeptide reads, in one-letter code: MKASVLITLAVLGVMFVWASAAELEERGSDQRDSPAWLKSMERIFQSEERECRKMFGGCSVDSDCCAHLGCKPTLKYCAWDGTFGK.

Residues methionine 1–alanine 21 form the signal peptide. The propeptide occupies alanine 22 to arginine 50. 3 disulfides stabilise this stretch: cysteine 52–cysteine 66, cysteine 59–cysteine 71, and cysteine 65–cysteine 78. Phenylalanine 84 carries the phenylalanine amide modification.

The protein belongs to the neurotoxin 10 (Hwtx-1) family. 28 (Jztx-11) subfamily. As to expression, expressed by the venom gland.

The protein localises to the secreted. Functionally, this toxin acts as a voltage-dependent gating-modifier. It inhibits the sodium conductance (IC(50)=124 nM) and slows the fast inactivation (EC(50)=1180 nM) of Nav1.5/SCN5A. It significantly shifts the activation to more depolarized voltages and decreases the deactivation of Nav1.5 currents upon extreme depolarization, but only slightly affects voltage-dependence of steady-state inactivation. In addition, this toxin causes an approximately five-fold decrease in the rate of recovery from inactivation and an approximately 1.9-fold reduction in the closed-state inactivation rate. This toxin integrates the functions of site 3 toxins (alpha-scorpion toxins) with site 4 toxins (beta-scorpion and spider toxins) by targeting multiple sites on Nav1.5. Also shows inhibition of voltage-gated potassium channels (5 uM completely inhibits Kv2.1/KCNB1, whereas 5 uM moderately inhibits Kv4.2/KCND2 Kv4.1/KCND1 channels). The protein is Kappa-theraphotoxin-Cg1a 4 of Chilobrachys guangxiensis (Chinese earth tiger tarantula).